The primary structure comprises 179 residues: MRFFVSGMPGVGKTTLAKRIADEIRREGYKVGGIITQEIRTGPKRSGFRVIALDTGEIGRLAYVGQGYPRVGRYVVDIEGFDRVAIPAISRALRDADIIIIDEIGPMEFKSNEFLKALGLVLKSEKPLLATVHRKLVDRYRPLGRYYWLTPENRNEVFAEILMEIRKVLGRNENAGNKA.

Residues 7 to 14 (GMPGVGKT) and 98 to 105 (IIIIDEIG) each bind ATP.

It belongs to the THEP1 NTPase family.

The enzyme catalyses a ribonucleoside 5'-triphosphate + H2O = a ribonucleoside 5'-diphosphate + phosphate + H(+). Has nucleotide phosphatase activity towards ATP, GTP, CTP, TTP and UTP. May hydrolyze nucleoside diphosphates with lower efficiency. In Pyrococcus abyssi (strain GE5 / Orsay), this protein is Nucleoside-triphosphatase THEP1.